Consider the following 171-residue polypeptide: Lipoprotein signal peptidase (171 aa).

Helical transmembrane passes span 12 to 32 (WYWV…WVLA), 67 to 87 (WQRW…TVWL), and 93 to 113 (SLLK…GNLV). Catalysis depends on residues aspartate 123 and aspartate 141. A helical transmembrane segment spans residues 137–157 (FNIADSAICIGAVLIIWDAFL).

It belongs to the peptidase A8 family.

It localises to the cell inner membrane. The catalysed reaction is Release of signal peptides from bacterial membrane prolipoproteins. Hydrolyzes -Xaa-Yaa-Zaa-|-(S,diacylglyceryl)Cys-, in which Xaa is hydrophobic (preferably Leu), and Yaa (Ala or Ser) and Zaa (Gly or Ala) have small, neutral side chains.. The protein operates within protein modification; lipoprotein biosynthesis (signal peptide cleavage). This protein specifically catalyzes the removal of signal peptides from prolipoproteins. The sequence is that of Lipoprotein signal peptidase from Shewanella baltica (strain OS195).